Reading from the N-terminus, the 218-residue chain is Oxaloacetate decarboxylase, mitochondrial (218 aa).

The transit peptide at Met1–Tyr18 directs the protein to the mitochondrion. Mg(2+)-binding residues include Glu63, Glu65, and Asp94.

It belongs to the FAH family. In terms of assembly, homodimer. The cofactor is Mg(2+). Requires Mn(2+) as cofactor.

It is found in the mitochondrion. It localises to the cytoplasm. Its subcellular location is the cytosol. It carries out the reaction a 3-acylpyruvate + H2O = a carboxylate + pyruvate + H(+). The catalysed reaction is acetylpyruvate + H2O = acetate + pyruvate + H(+). It catalyses the reaction 3-fumarylpyruvate + H2O = fumarate + pyruvate + H(+). The enzyme catalyses oxaloacetate + H(+) = pyruvate + CO2. Functionally, mitochondrial protein that acts as an oxaloacetate decarboxylase (ODx), catalyzing the decarboxylation of oxaloacetate (OAA) to pyruvate and CO(2), and as such is likely a regulatory enzyme in the TCA cycle. Also displays acylpyruvase activity, being able to hydrolyze acetylpyruvate and fumarylpyruvate in vitro. This Dictyostelium discoideum (Social amoeba) protein is Oxaloacetate decarboxylase, mitochondrial (fahd1).